The primary structure comprises 310 residues: Ribonuclease Z (310 aa).

Residues H64, H66, D68, H69, H146, D215, and H273 each contribute to the Zn(2+) site. D68 (proton acceptor) is an active-site residue.

It belongs to the RNase Z family. As to quaternary structure, homodimer. The cofactor is Zn(2+).

The enzyme catalyses Endonucleolytic cleavage of RNA, removing extra 3' nucleotides from tRNA precursor, generating 3' termini of tRNAs. A 3'-hydroxy group is left at the tRNA terminus and a 5'-phosphoryl group is left at the trailer molecule.. Its function is as follows. Zinc phosphodiesterase, which displays some tRNA 3'-processing endonuclease activity. Probably involved in tRNA maturation, by removing a 3'-trailer from precursor tRNA. The chain is Ribonuclease Z from Aeropyrum pernix (strain ATCC 700893 / DSM 11879 / JCM 9820 / NBRC 100138 / K1).